The primary structure comprises 652 residues: MEKRMKELVDKLNQYAKEYYTEDNPSVSDAEYDKLYRELVTLEAEHPELVQADSPTHRVGGLVLDGFEKYQHEYPLYSLQDAFSREELDAFDKRVKSEFPNADYMAELKIDGLSISLTYVDGILQVGATRGDGSVGENITENVKRISDIPLKLDQPLNITVRGECYLPRAEFERINTQRQENGEAEFANPRNAAAGTLRQLDTKVVAERRLATFFYQEASPTERLTQNDVLNEVAELGFSVNPRRIVTSSMDEIWDFIQAVGQDRDHLAYDIDGVVIKVNSLAIQEELGFTVKAPRWAIAYKFPAEEKEAKLLSVDWQVGRTGVVTPTANLTPVQLAGTTVSRATLHNVDYITEKDIRIGDTVIVYKAGDIIPAVLRVVESKRTTQEAMPVPSQCPSCGSGLLHFEDEVALRCINPSCPAQIKEGLIHFASRDAMNISGMGPSVVEKLFKAELVKEVADIYGLNSQDFLQLEGFKEKSAEKLYAAIQASKENSAEKLLYGLGIRHVGAKVSKQLLESFGTIKELASADVQAIAAVDGLGEVIAKSIQRYFAKEEAQVLLKELESYGVNLSYLGQKVADDAILSGKTVVLTGKLEHLKRSEAKAKLEALGAKVTGSVSKKTDLVVAGSDAGSKLEKAQSLGIEVKDEAWLLDL.

Residues 29–33 (DAEYD), 78–79 (SL), and glutamate 107 each bind NAD(+). Lysine 109 (N6-AMP-lysine intermediate) is an active-site residue. Positions 130, 164, 278, and 302 each coordinate NAD(+). The Zn(2+) site is built by cysteine 395, cysteine 398, cysteine 413, and cysteine 418. Residues 577–652 (ADDAILSGKT…VKDEAWLLDL (76 aa)) form the BRCT domain.

It belongs to the NAD-dependent DNA ligase family. LigA subfamily. It depends on Mg(2+) as a cofactor. Requires Mn(2+) as cofactor.

The enzyme catalyses NAD(+) + (deoxyribonucleotide)n-3'-hydroxyl + 5'-phospho-(deoxyribonucleotide)m = (deoxyribonucleotide)n+m + AMP + beta-nicotinamide D-nucleotide.. Functionally, DNA ligase that catalyzes the formation of phosphodiester linkages between 5'-phosphoryl and 3'-hydroxyl groups in double-stranded DNA using NAD as a coenzyme and as the energy source for the reaction. It is essential for DNA replication and repair of damaged DNA. The chain is DNA ligase from Streptococcus thermophilus (strain CNRZ 1066).